The chain runs to 349 residues: Terpene synthase 2 (349 aa).

The DDxx(x)D/E motif signature appears at 84 to 89 (DDLFDG). An NDxxSxxxD/E motif motif is present at residues 229–237 (NDCVSYEKE).

Belongs to the terpene synthase family.

It catalyses the reaction (2E,6E)-farnesyl diphosphate = (3S)-(+)-asterisca-2(9),6-diene + diphosphate. It carries out the reaction (2E)-geranyl diphosphate = (Z)-beta-ocimene + diphosphate. The enzyme catalyses (2E)-geranyl diphosphate + H2O = linalool + diphosphate. Functionally, terpene synthase that converts its substrate farnesyl diphosphate (FPP) into the sesquiterpene (3S)-(+)-asterisca-2(9),6-diene. Is also able to convert geranyl diphosphate (GPP) into a mixture of monoterpenes including (Z)-beta-ocimene, allo-ocimene and linalool. This Dictyostelium discoideum (Social amoeba) protein is Terpene synthase 2.